The following is a 195-amino-acid chain: HTH-type transcriptional regulator TtmR (195 aa).

Positions 47-177 (DSQLCFAVYA…LLDNLASMRD (131 aa)) constitute an HTH marR-type domain. The segment at residues 93 to 116 (VKEIGSRLFLDSGTLTPLLKRLEA) is a DNA-binding region (H-T-H motif).

The protein localises to the cytoplasm. Functionally, formaldehyde-responsive transcription factor that modulates resistance to stress induced by formaldehyde. Impacts the expression of a number of genes encoding transcription factors and/or involved in stress response, including efgA, and which probably collectively trigger a formaldehyde-specific physiological response. Required for optimal transition to methylotrophy. Not involved in a general stress response. This is HTH-type transcriptional regulator TtmR from Methylorubrum extorquens (strain PA1) (Methylobacterium extorquens).